A 250-amino-acid polypeptide reads, in one-letter code: Triosephosphate isomerase (250 aa).

Residue 9–11 participates in substrate binding; the sequence is NWK. H95 (electrophile) is an active-site residue. The active-site Proton acceptor is the E167. Residues G173, S213, and 234–235 each bind substrate; that span reads GG.

Belongs to the triosephosphate isomerase family. In terms of assembly, homodimer.

It is found in the cytoplasm. The catalysed reaction is D-glyceraldehyde 3-phosphate = dihydroxyacetone phosphate. Its pathway is carbohydrate biosynthesis; gluconeogenesis. The protein operates within carbohydrate degradation; glycolysis; D-glyceraldehyde 3-phosphate from glycerone phosphate: step 1/1. Involved in the gluconeogenesis. Catalyzes stereospecifically the conversion of dihydroxyacetone phosphate (DHAP) to D-glyceraldehyde-3-phosphate (G3P). The protein is Triosephosphate isomerase of Chloroflexus aurantiacus (strain ATCC 29366 / DSM 635 / J-10-fl).